Consider the following 514-residue polypeptide: 2-isopropylmalate synthase (514 aa).

Residues 4–266 (INVFDTSLRD…KTGLKLSELK (263 aa)) enclose the Pyruvate carboxyltransferase domain. Positions 13, 201, 203, and 237 each coordinate Mn(2+). A regulatory domain region spans residues 390 to 514 (ELTALQVTYG…AKREMAKVES (125 aa)).

The protein belongs to the alpha-IPM synthase/homocitrate synthase family. LeuA type 1 subfamily. As to quaternary structure, homodimer. The cofactor is Mn(2+).

It is found in the cytoplasm. The catalysed reaction is 3-methyl-2-oxobutanoate + acetyl-CoA + H2O = (2S)-2-isopropylmalate + CoA + H(+). Its pathway is amino-acid biosynthesis; L-leucine biosynthesis; L-leucine from 3-methyl-2-oxobutanoate: step 1/4. Its function is as follows. Catalyzes the condensation of the acetyl group of acetyl-CoA with 3-methyl-2-oxobutanoate (2-ketoisovalerate) to form 3-carboxy-3-hydroxy-4-methylpentanoate (2-isopropylmalate). This is 2-isopropylmalate synthase from Shouchella clausii (strain KSM-K16) (Alkalihalobacillus clausii).